The chain runs to 356 residues: UDP-3-O-acylglucosamine N-acyltransferase (356 aa).

The Proton acceptor role is filled by His-242.

This sequence belongs to the transferase hexapeptide repeat family. LpxD subfamily. As to quaternary structure, homotrimer.

The enzyme catalyses a UDP-3-O-[(3R)-3-hydroxyacyl]-alpha-D-glucosamine + a (3R)-hydroxyacyl-[ACP] = a UDP-2-N,3-O-bis[(3R)-3-hydroxyacyl]-alpha-D-glucosamine + holo-[ACP] + H(+). Its pathway is bacterial outer membrane biogenesis; LPS lipid A biosynthesis. In terms of biological role, catalyzes the N-acylation of UDP-3-O-acylglucosamine using 3-hydroxyacyl-ACP as the acyl donor. Is involved in the biosynthesis of lipid A, a phosphorylated glycolipid that anchors the lipopolysaccharide to the outer membrane of the cell. The chain is UDP-3-O-acylglucosamine N-acyltransferase from Acinetobacter baumannii (strain AB0057).